The primary structure comprises 81 residues: ATP synthase subunit c, chloroplastic (81 aa).

2 helical membrane-spanning segments follow: residues Pro-3–Gly-23 and Leu-57–Ala-77.

It belongs to the ATPase C chain family. As to quaternary structure, F-type ATPases have 2 components, F(1) - the catalytic core - and F(0) - the membrane proton channel. F(1) has five subunits: alpha(3), beta(3), gamma(1), delta(1), epsilon(1). F(0) has four main subunits: a(1), b(1), b'(1) and c(10-14). The alpha and beta chains form an alternating ring which encloses part of the gamma chain. F(1) is attached to F(0) by a central stalk formed by the gamma and epsilon chains, while a peripheral stalk is formed by the delta, b and b' chains.

The protein localises to the plastid. The protein resides in the chloroplast thylakoid membrane. Functionally, f(1)F(0) ATP synthase produces ATP from ADP in the presence of a proton or sodium gradient. F-type ATPases consist of two structural domains, F(1) containing the extramembraneous catalytic core and F(0) containing the membrane proton channel, linked together by a central stalk and a peripheral stalk. During catalysis, ATP synthesis in the catalytic domain of F(1) is coupled via a rotary mechanism of the central stalk subunits to proton translocation. Key component of the F(0) channel; it plays a direct role in translocation across the membrane. A homomeric c-ring of between 10-14 subunits forms the central stalk rotor element with the F(1) delta and epsilon subunits. This is ATP synthase subunit c, chloroplastic from Cicer arietinum (Chickpea).